Reading from the N-terminus, the 362-residue chain is Chorismate synthase (362 aa).

Residues Arg-48 and Arg-54 each contribute to the NADP(+) site. Residues 125–127, 238–239, Gly-278, 293–297, and Arg-319 each bind FMN; these read RSS, NA, and KPTSS.

This sequence belongs to the chorismate synthase family. As to quaternary structure, homotetramer. The cofactor is FMNH2.

It catalyses the reaction 5-O-(1-carboxyvinyl)-3-phosphoshikimate = chorismate + phosphate. Its pathway is metabolic intermediate biosynthesis; chorismate biosynthesis; chorismate from D-erythrose 4-phosphate and phosphoenolpyruvate: step 7/7. In terms of biological role, catalyzes the anti-1,4-elimination of the C-3 phosphate and the C-6 proR hydrogen from 5-enolpyruvylshikimate-3-phosphate (EPSP) to yield chorismate, which is the branch point compound that serves as the starting substrate for the three terminal pathways of aromatic amino acid biosynthesis. This reaction introduces a second double bond into the aromatic ring system. The chain is Chorismate synthase from Psychromonas ingrahamii (strain DSM 17664 / CCUG 51855 / 37).